Here is a 437-residue protein sequence, read N- to C-terminus: MSKPVIAIVGRPNVGKSTIFNRIVGERVAIVEDRPGVTRDRIYSHGEWLNREFNVIDTGGIEIGDEPLLVQMRAQAELAIKEADVIIFIVNGREGVTAADQEVAKLLFRSKKPVVLGVNKIDHPDMQEELYEFYSLGIGDPIPISGAHGLGLGDLLDACVEHFPEDEGDDYDEDTIRISLIGRPNVGKSSLVNAMLGEERVIVSNIPGTTRDAIDTAFSRDDQEYVLIDTAGMRKRGKVYESTEKYSVLRSLKAIERSDVVLVVLNGEEGIIEQDKKIAGYAHEAGRAIIIVVNKWDAVEKDDKTLHRFQQKIRDEFQFLDYAPVLFVSAKTKQRLQHVLPAVKKVSENHNLRVPTHVLNDLVMDAVAMNPTPTDHGKRLKINYVTQVAVGPPTFVFFVNDPELMHFSYARFLENRLRDTFEFEGTPIKIIARKKND.

EngA-type G domains lie at 4 to 167 and 176 to 351; these read PVIA…PEDE and IRIS…ENHN. GTP-binding positions include 10 to 17, 57 to 61, 119 to 122, 182 to 189, 229 to 233, and 294 to 297; these read GRPNVGKS, DTGGI, NKID, DTAGM, and NKWD. The region spanning 352–436 is the KH-like domain; the sequence is LRVPTHVLND…PIKIIARKKN (85 aa).

It belongs to the TRAFAC class TrmE-Era-EngA-EngB-Septin-like GTPase superfamily. EngA (Der) GTPase family. As to quaternary structure, associates with the 50S ribosomal subunit.

In terms of biological role, GTPase that plays an essential role in the late steps of ribosome biogenesis. The protein is GTPase Der of Halalkalibacterium halodurans (strain ATCC BAA-125 / DSM 18197 / FERM 7344 / JCM 9153 / C-125) (Bacillus halodurans).